Here is a 402-residue protein sequence, read N- to C-terminus: MSRVSQARNLGKYFLLIDNMLVVLGFFVVFPLISIRFVDQMGWAAVMVGIALGLRQFIQQGLGIFGGAIADRFGAKPMIVTGMLMRAAGFATMGIAHEPWLLWFSCFLSGLGGTLFDPPRSALVVKLIRPEQRDRFFSLLMMQDSAGAVIGALLGSWLLQYDFRLVCATGAILFILCALFNAWLLPAWKLSTVRTPVREGMRRVMSDKRFVTYVLTLAGYYMLAVQVMLMLPIMVNDIAGSPAAVKWMYAIEACLSLTLLYPIARWSEKRFRLEHRLMAGLLVMSLSMLPIGMVGNLQQLFTLICAFYIGSVIAEPARETLSASLADARARGSYMGFSRLGLAIGGAIGYIGGGWLFDMGKALAQPELPWMMLGIIGFITFLALGWQFSHKRTPRRMLEPGA.

Over 1 to 12 the chain is Cytoplasmic; that stretch reads MSRVSQARNLGK. A helical transmembrane segment spans residues 13–33; it reads YFLLIDNMLVVLGFFVVFPLI. The Periplasmic portion of the chain corresponds to 34-98; that stretch reads SIRFVDQMGW…GFATMGIAHE (65 aa). A helical transmembrane segment spans residues 99-116; sequence PWLLWFSCFLSGLGGTLF. The Cytoplasmic portion of the chain corresponds to 117 to 138; that stretch reads DPPRSALVVKLIRPEQRDRFFS. The chain crosses the membrane as a helical span at residues 139–159; sequence LLMMQDSAGAVIGALLGSWLL. At 160 to 164 the chain is on the periplasmic side; it reads QYDFR. Residues 165–185 form a helical membrane-spanning segment; that stretch reads LVCATGAILFILCALFNAWLL. Residues 186–213 lie on the Cytoplasmic side of the membrane; sequence PAWKLSTVRTPVREGMRRVMSDKRFVTY. The helical transmembrane segment at 214-234 threads the bilayer; it reads VLTLAGYYMLAVQVMLMLPIM. Residues 235-243 lie on the Periplasmic side of the membrane; it reads VNDIAGSPA. The helical transmembrane segment at 244–264 threads the bilayer; it reads AVKWMYAIEACLSLTLLYPIA. The Cytoplasmic segment spans residues 265–276; the sequence is RWSEKRFRLEHR. The chain crosses the membrane as a helical span at residues 277–297; sequence LMAGLLVMSLSMLPIGMVGNL. Over 298 to 299 the chain is Periplasmic; it reads QQ. Residues 300–320 form a helical membrane-spanning segment; that stretch reads LFTLICAFYIGSVIAEPARET. At 321–339 the chain is on the cytoplasmic side; sequence LSASLADARARGSYMGFSR. The helical transmembrane segment at 340 to 360 threads the bilayer; it reads LGLAIGGAIGYIGGGWLFDMG. Over 361-367 the chain is Periplasmic; sequence KALAQPE. Residues 368 to 388 form a helical membrane-spanning segment; it reads LPWMMLGIIGFITFLALGWQF. Residues 389-402 lie on the Cytoplasmic side of the membrane; the sequence is SHKRTPRRMLEPGA.

This sequence belongs to the major facilitator superfamily. DHA1 family. MdtH (TC 2.A.1.2.21) subfamily.

It localises to the cell inner membrane. The sequence is that of Multidrug resistance protein MdtH from Salmonella typhimurium (strain LT2 / SGSC1412 / ATCC 700720).